The sequence spans 461 residues: Cysteine--tRNA ligase (461 aa).

Cysteine 28 contacts Zn(2+). The 'HIGH' region signature appears at 30–40 (ITVYDLCHIGH). Residues cysteine 209, histidine 234, and glutamate 238 each coordinate Zn(2+). Residues 266–270 (KMSKS) carry the 'KMSKS' region motif. ATP is bound at residue lysine 269.

This sequence belongs to the class-I aminoacyl-tRNA synthetase family. As to quaternary structure, monomer. It depends on Zn(2+) as a cofactor.

It is found in the cytoplasm. The catalysed reaction is tRNA(Cys) + L-cysteine + ATP = L-cysteinyl-tRNA(Cys) + AMP + diphosphate. The sequence is that of Cysteine--tRNA ligase from Escherichia coli (strain 55989 / EAEC).